The sequence spans 381 residues: L-lactate dehydrogenase (381 aa).

Residues 1–380 (MIISSANDYR…TRDALVDLSK (380 aa)) enclose the FMN hydroxy acid dehydrogenase domain. Residue Y24 coordinates substrate. S106 and Q127 together coordinate FMN. Residue Y129 participates in substrate binding. Residue T155 participates in FMN binding. Substrate is bound at residue R164. Residue K251 coordinates FMN. H275 serves as the catalytic Proton acceptor. R278 contributes to the substrate binding site. Residue 306-330 (DSGIRNGLDIVRMLALGADATMLGR) coordinates FMN.

It belongs to the FMN-dependent alpha-hydroxy acid dehydrogenase family. Requires FMN as cofactor.

It localises to the cell inner membrane. It catalyses the reaction (S)-lactate + A = pyruvate + AH2. In terms of biological role, catalyzes the conversion of L-lactate to pyruvate. Is coupled to the respiratory chain. In Actinobacillus pleuropneumoniae serotype 5b (strain L20), this protein is L-lactate dehydrogenase.